We begin with the raw amino-acid sequence, 815 residues long: DNA topoisomerase 1 (815 aa).

A Toprim domain is found at 3 to 119 (KHLLIVESPA…QRIVFTEITP (117 aa)). Positions 9 and 82 each coordinate Mg(2+). The region spanning 133–573 (ASDLVDAQQA…KFWVPFKELV (441 aa)) is the Topo IA-type catalytic domain. Positions 167–172 (SAGRVQ) are interaction with DNA. Tyrosine 308 acts as the O-(5'-phospho-DNA)-tyrosine intermediate in catalysis. The tract at residues 759-815 (TGKPARKNFSTKKTATKNETRKQTTKKRTTDAKATKKVSDKPVKKQIKKRIAPNITQ) is disordered. Positions 774-801 (TKNETRKQTTKKRTTDAKATKKVSDKPV) are enriched in basic and acidic residues.

The protein belongs to the type IA topoisomerase family. Monomer. Mg(2+) serves as cofactor.

The enzyme catalyses ATP-independent breakage of single-stranded DNA, followed by passage and rejoining.. Its function is as follows. Releases the supercoiling and torsional tension of DNA, which is introduced during the DNA replication and transcription, by transiently cleaving and rejoining one strand of the DNA duplex. Introduces a single-strand break via transesterification at a target site in duplex DNA. The scissile phosphodiester is attacked by the catalytic tyrosine of the enzyme, resulting in the formation of a DNA-(5'-phosphotyrosyl)-enzyme intermediate and the expulsion of a 3'-OH DNA strand. The free DNA strand then undergoes passage around the unbroken strand, thus removing DNA supercoils. Finally, in the religation step, the DNA 3'-OH attacks the covalent intermediate to expel the active-site tyrosine and restore the DNA phosphodiester backbone. The sequence is that of DNA topoisomerase 1 from Xylella fastidiosa (strain Temecula1 / ATCC 700964).